The chain runs to 237 residues: 2-C-methyl-D-erythritol 4-phosphate cytidylyltransferase (237 aa).

The protein belongs to the IspD/TarI cytidylyltransferase family. IspD subfamily.

The enzyme catalyses 2-C-methyl-D-erythritol 4-phosphate + CTP + H(+) = 4-CDP-2-C-methyl-D-erythritol + diphosphate. The protein operates within isoprenoid biosynthesis; isopentenyl diphosphate biosynthesis via DXP pathway; isopentenyl diphosphate from 1-deoxy-D-xylulose 5-phosphate: step 2/6. Catalyzes the formation of 4-diphosphocytidyl-2-C-methyl-D-erythritol from CTP and 2-C-methyl-D-erythritol 4-phosphate (MEP). In Vibrio vulnificus (strain CMCP6), this protein is 2-C-methyl-D-erythritol 4-phosphate cytidylyltransferase.